The sequence spans 119 residues: Ribosome-binding factor A (119 aa).

Belongs to the RbfA family. In terms of assembly, monomer. Binds 30S ribosomal subunits, but not 50S ribosomal subunits or 70S ribosomes.

The protein localises to the cytoplasm. In terms of biological role, one of several proteins that assist in the late maturation steps of the functional core of the 30S ribosomal subunit. Associates with free 30S ribosomal subunits (but not with 30S subunits that are part of 70S ribosomes or polysomes). Required for efficient processing of 16S rRNA. May interact with the 5'-terminal helix region of 16S rRNA. This Wolinella succinogenes (strain ATCC 29543 / DSM 1740 / CCUG 13145 / JCM 31913 / LMG 7466 / NCTC 11488 / FDC 602W) (Vibrio succinogenes) protein is Ribosome-binding factor A.